A 115-amino-acid polypeptide reads, in one-letter code: 5-hydroxyisourate hydrolase (115 aa).

The segment at 1–23 (MSGLTTHILDQASGKPAAGVGVR) is disordered. Residues H7, R45, and Y112 each coordinate substrate.

The protein belongs to the transthyretin family. 5-hydroxyisourate hydrolase subfamily. In terms of assembly, homotetramer.

It catalyses the reaction 5-hydroxyisourate + H2O = 5-hydroxy-2-oxo-4-ureido-2,5-dihydro-1H-imidazole-5-carboxylate + H(+). In terms of biological role, catalyzes the hydrolysis of 5-hydroxyisourate (HIU) to 2-oxo-4-hydroxy-4-carboxy-5-ureidoimidazoline (OHCU). This is 5-hydroxyisourate hydrolase from Caulobacter vibrioides (strain ATCC 19089 / CIP 103742 / CB 15) (Caulobacter crescentus).